A 145-amino-acid chain; its full sequence is Large ribosomal subunit protein uL13 (145 aa).

The protein belongs to the universal ribosomal protein uL13 family. In terms of assembly, part of the 50S ribosomal subunit.

In terms of biological role, this protein is one of the early assembly proteins of the 50S ribosomal subunit, although it is not seen to bind rRNA by itself. It is important during the early stages of 50S assembly. This chain is Large ribosomal subunit protein uL13, found in Bacillus licheniformis (strain ATCC 14580 / DSM 13 / JCM 2505 / CCUG 7422 / NBRC 12200 / NCIMB 9375 / NCTC 10341 / NRRL NRS-1264 / Gibson 46).